We begin with the raw amino-acid sequence, 466 residues long: 3-isopropylmalate dehydratase large subunit (466 aa).

[4Fe-4S] cluster contacts are provided by cysteine 347, cysteine 407, and cysteine 410.

Belongs to the aconitase/IPM isomerase family. LeuC type 1 subfamily. In terms of assembly, heterodimer of LeuC and LeuD. It depends on [4Fe-4S] cluster as a cofactor.

It carries out the reaction (2R,3S)-3-isopropylmalate = (2S)-2-isopropylmalate. The protein operates within amino-acid biosynthesis; L-leucine biosynthesis; L-leucine from 3-methyl-2-oxobutanoate: step 2/4. Functionally, catalyzes the isomerization between 2-isopropylmalate and 3-isopropylmalate, via the formation of 2-isopropylmaleate. The protein is 3-isopropylmalate dehydratase large subunit of Escherichia coli O17:K52:H18 (strain UMN026 / ExPEC).